The following is a 779-amino-acid chain: Endonuclease MutS2 (779 aa).

ATP is bound at residue 328-335; that stretch reads GPNTGGKT. The region spanning 704 to 779 is the Smr domain; that stretch reads LDLRGKRYEE…GSGATIVTLG (76 aa).

The protein belongs to the DNA mismatch repair MutS family. MutS2 subfamily. In terms of assembly, homodimer. Binds to stalled ribosomes, contacting rRNA.

Endonuclease that is involved in the suppression of homologous recombination and thus may have a key role in the control of bacterial genetic diversity. Functionally, acts as a ribosome collision sensor, splitting the ribosome into its 2 subunits. Detects stalled/collided 70S ribosomes which it binds and splits by an ATP-hydrolysis driven conformational change. Acts upstream of the ribosome quality control system (RQC), a ribosome-associated complex that mediates the extraction of incompletely synthesized nascent chains from stalled ribosomes and their subsequent degradation. Probably generates substrates for RQC. The polypeptide is Endonuclease MutS2 (Streptococcus agalactiae serotype III (strain NEM316)).